The following is a 121-amino-acid chain: Large ribosomal subunit protein eL8 (121 aa).

The protein belongs to the eukaryotic ribosomal protein eL8 family. Part of the 50S ribosomal subunit. Probably part of the RNase P complex.

The protein resides in the cytoplasm. Functionally, multifunctional RNA-binding protein that recognizes the K-turn motif in ribosomal RNA, the RNA component of RNase P, box H/ACA, box C/D and box C'/D' sRNAs. This is Large ribosomal subunit protein eL8 from Thermoplasma volcanium (strain ATCC 51530 / DSM 4299 / JCM 9571 / NBRC 15438 / GSS1).